The primary structure comprises 307 residues: Lactamase-like protein vrtG (307 aa).

Zn(2+) is bound by residues histidine 97, histidine 99, aspartate 101, and histidine 102. Catalysis depends on aspartate 101, which acts as the Proton donor/acceptor.

The protein belongs to the metallo-beta-lactamase superfamily. Zn(2+) serves as cofactor.

It participates in secondary metabolite biosynthesis; terpenoid biosynthesis. Its function is as follows. Lactamase-like protein; part of the gene cluster that mediates the biosynthesis of viridicatumtoxin, a tetracycline-like fungal meroterpenoid with a unique, fused spirobicyclic ring system. The first step of the pathway is the production of the malonamoyl-CoA starter unit for the polyketide synthase vrtA. The aldolase vrtJ may be involved in the synthesis of the malonamate substrate for malonamoyl-CoA synthetase vrtB. The polyketide synthase vrtA then may utilize the malonamoyl-CoA starter unit, followed by sequential condensation of eight malonyl-CoA units to form the polyketide backbone. The cyclization of the last ring could be mediated by the lactamase-like protein vrtG. The proposed post-PKS tailoring steps are a hydroxylation at C5 catalyzed the cytochrome P450 monooxygenase vrtE, a hydroxylation at C12a catalyzed by VrtH and/or VrtI, and an O-methylation by the O-methyltransferase vrtF. VrtC is then proposed to catalyze the transfer of a geranyl group synthesized by vrtD to the aromatic C ring of the tetracyclic polyketide intermediate of viridicatumtoxin to yield previridicatumtoxin. Finally, the cytochrome P450 monooxygenase vrtK catalyzes the spirocyclization of the geranyl moiety of previridicatumtoxin to afford viridicatumtoxin. The sequence is that of Lactamase-like protein vrtG from Penicillium aethiopicum.